The primary structure comprises 613 residues: Dihydroxy-acid dehydratase (613 aa).

Residue D81 participates in Mg(2+) binding. C122 is a binding site for [2Fe-2S] cluster. Mg(2+) contacts are provided by D123 and K124. N6-carboxylysine is present on K124. C193 contributes to the [2Fe-2S] cluster binding site. Residue E489 participates in Mg(2+) binding. The active-site Proton acceptor is S515.

Belongs to the IlvD/Edd family. In terms of assembly, homodimer. It depends on [2Fe-2S] cluster as a cofactor. Requires Mg(2+) as cofactor.

It carries out the reaction (2R)-2,3-dihydroxy-3-methylbutanoate = 3-methyl-2-oxobutanoate + H2O. The enzyme catalyses (2R,3R)-2,3-dihydroxy-3-methylpentanoate = (S)-3-methyl-2-oxopentanoate + H2O. Its pathway is amino-acid biosynthesis; L-isoleucine biosynthesis; L-isoleucine from 2-oxobutanoate: step 3/4. It functions in the pathway amino-acid biosynthesis; L-valine biosynthesis; L-valine from pyruvate: step 3/4. Functionally, functions in the biosynthesis of branched-chain amino acids. Catalyzes the dehydration of (2R,3R)-2,3-dihydroxy-3-methylpentanoate (2,3-dihydroxy-3-methylvalerate) into 2-oxo-3-methylpentanoate (2-oxo-3-methylvalerate) and of (2R)-2,3-dihydroxy-3-methylbutanoate (2,3-dihydroxyisovalerate) into 2-oxo-3-methylbutanoate (2-oxoisovalerate), the penultimate precursor to L-isoleucine and L-valine, respectively. The sequence is that of Dihydroxy-acid dehydratase from Pseudomonas putida (strain GB-1).